The primary structure comprises 823 residues: Leucine--tRNA ligase (823 aa).

The 'HIGH' region motif lies at proline 55 to histidine 65. The 'KMSKS' region signature appears at lysine 590 to serine 594. Lysine 593 contacts ATP.

This sequence belongs to the class-I aminoacyl-tRNA synthetase family.

The protein resides in the cytoplasm. The enzyme catalyses tRNA(Leu) + L-leucine + ATP = L-leucyl-tRNA(Leu) + AMP + diphosphate. This is Leucine--tRNA ligase from Deinococcus radiodurans (strain ATCC 13939 / DSM 20539 / JCM 16871 / CCUG 27074 / LMG 4051 / NBRC 15346 / NCIMB 9279 / VKM B-1422 / R1).